The sequence spans 335 residues: UPF0353 protein MLBr01808 (335 aa).

The next 2 membrane-spanning stretches (helical) occupy residues 18–38 (WFFL…MMQV) and 67–87 (VPAI…AGPT). The VWFA domain occupies 98–294 (VVMLVIDVSQ…AELKAVYASL (197 aa)). A helical transmembrane segment spans residues 309–329 (AGWLRLGVLVLALAALTALLI).

The protein belongs to the UPF0353 family.

The protein resides in the cell membrane. The polypeptide is UPF0353 protein MLBr01808 (Mycobacterium leprae (strain Br4923)).